A 410-amino-acid polypeptide reads, in one-letter code: Cysteine desulfurase IscS (410 aa).

Pyridoxal 5'-phosphate is bound by residues 80–81 (AT), Asn160, Gln188, and 208–210 (SGH). Lys211 is subject to N6-(pyridoxal phosphate)lysine. Pyridoxal 5'-phosphate is bound at residue Thr248. Residue Cys334 is the Cysteine persulfide intermediate of the active site. Residue Cys334 participates in [2Fe-2S] cluster binding.

It belongs to the class-V pyridoxal-phosphate-dependent aminotransferase family. NifS/IscS subfamily. In terms of assembly, homodimer. Forms a heterotetramer with IscU, interacts with other sulfur acceptors. The cofactor is pyridoxal 5'-phosphate.

Its subcellular location is the cytoplasm. The catalysed reaction is (sulfur carrier)-H + L-cysteine = (sulfur carrier)-SH + L-alanine. It functions in the pathway cofactor biosynthesis; iron-sulfur cluster biosynthesis. Master enzyme that delivers sulfur to a number of partners involved in Fe-S cluster assembly, tRNA modification or cofactor biosynthesis. Catalyzes the removal of elemental sulfur atoms from cysteine to produce alanine. Functions as a sulfur delivery protein for Fe-S cluster synthesis onto IscU, an Fe-S scaffold assembly protein, as well as other S acceptor proteins. The chain is Cysteine desulfurase IscS from Rickettsia prowazekii (strain Madrid E).